We begin with the raw amino-acid sequence, 221 residues long: MRSQLSLIGKKEGMMHVFDKNGNLVACSVISVDANVVAQLKTASSDGYNAVQIGADVVQAPEKTIEKRFSKALLGHFKKSGGRACRVLKEVVVSEEAVQSVSLGDEFGLEIFDGVSNVDICGISKGKGFQGVMKKFGFRGGPKSHGSGFHRHAGSIGMRSTPGRCFPGSKRPSHMGCDRVTVKNLEVVKVDLDRKVMLVKGAIPGFKGSVVVVKRSCGVEG.

The protein belongs to the universal ribosomal protein uL3 family. In terms of assembly, part of the 50S ribosomal subunit. Forms a cluster with proteins L14 and L19.

Functionally, one of the primary rRNA binding proteins, it binds directly near the 3'-end of the 23S rRNA, where it nucleates assembly of the 50S subunit. The chain is Large ribosomal subunit protein uL3 from Chlamydia trachomatis serovar L2 (strain ATCC VR-902B / DSM 19102 / 434/Bu).